Reading from the N-terminus, the 328-residue chain is Cytochrome c biogenesis protein CcsA (328 aa).

8 consecutive transmembrane segments (helical) span residues 13-33 (ISFSVVSIVLTIYFLTLLVNL), 46-66 (GIIITFFGITGLLFTRWIYSG), 73-93 (LYESLIFLSWAFSIIHMVSYF), 101-121 (LNAITAPSAIFIQGFATSGLL), 146-166 (MILGYGALLCGSLLSIALLVI), 234-254 (IISLGFIFLTVGILSGAVWAN), 263-283 (WDPKETWAFITWTIFAIYLHI), and 295-315 (AIVASIGFLLIWICYFGVILL).

This sequence belongs to the CcmF/CycK/Ccl1/NrfE/CcsA family. In terms of assembly, may interact with Ccs1.

The protein localises to the plastid. The protein resides in the chloroplast thylakoid membrane. Required during biogenesis of c-type cytochromes (cytochrome c6 and cytochrome f) at the step of heme attachment. This chain is Cytochrome c biogenesis protein CcsA, found in Crucihimalaya wallichii (Rock-cress).